A 256-amino-acid polypeptide reads, in one-letter code: Hydroxyethylthiazole kinase (256 aa).

Met-38 contacts substrate. Positions 114 and 159 each coordinate ATP. Substrate is bound at residue Gly-186.

Belongs to the Thz kinase family. Requires Mg(2+) as cofactor.

The catalysed reaction is 5-(2-hydroxyethyl)-4-methylthiazole + ATP = 4-methyl-5-(2-phosphooxyethyl)-thiazole + ADP + H(+). It functions in the pathway cofactor biosynthesis; thiamine diphosphate biosynthesis; 4-methyl-5-(2-phosphoethyl)-thiazole from 5-(2-hydroxyethyl)-4-methylthiazole: step 1/1. Catalyzes the phosphorylation of the hydroxyl group of 4-methyl-5-beta-hydroxyethylthiazole (THZ). This is Hydroxyethylthiazole kinase from Streptococcus agalactiae serotype Ia (strain ATCC 27591 / A909 / CDC SS700).